Consider the following 271-residue polypeptide: N-acetyltransferase ECO1 (271 aa).

A CCHH-type zinc finger spans residues 26-50 (VKCPKCSITYSTNSPSDLVQHKRYH). The N-acetyltransferase domain occupies 109–271 (VMISPKKANE…SGKLLIPCYI (163 aa)).

It belongs to the acetyltransferase family. ECO subfamily.

It localises to the nucleus. Probable acetyltransferase required for the establishment of sister chromatid cohesion and couple the processes of cohesion and DNA replication to ensure that only sister chromatids become paired together. In contrast to the structural cohesins, the deposition and establishment factors are required only during S phase. Acts by acetylating the cohesin complex component SMC3. This chain is N-acetyltransferase ECO1 (ECO1), found in Kluyveromyces lactis (strain ATCC 8585 / CBS 2359 / DSM 70799 / NBRC 1267 / NRRL Y-1140 / WM37) (Yeast).